The sequence spans 442 residues: GDP-L-galactose phosphorylase 1 (442 aa).

The Tele-GMP-histidine intermediate role is filled by histidine 238.

The protein belongs to the GDPGP1 family. Interacts with TLP1. In terms of tissue distribution, expressed in leaves, stems, roots, flowers and siliques. Highest expression in green tissues.

Its subcellular location is the cytoplasm. The protein localises to the nucleus. It catalyses the reaction GDP-beta-L-galactose + phosphate = beta-L-galactose 1-phosphate + GDP + H(+). The protein operates within cofactor biosynthesis; L-ascorbate biosynthesis via GDP-alpha-D-mannose pathway; L-ascorbate from GDP-alpha-D-mannose: step 2/5. Its activity is regulated as follows. Not inhibited by dithiothreitol, N-ethylmaleimide, phenylmethane sulfonyl fluoride, ascorbate, L-galactose and L-galactonolactone. Catalyzes a reaction of the Smirnoff-Wheeler pathway, the major route to ascorbate biosynthesis in plants. Acts as a phosphorylase rather than as a transferase. Uses preferentially GDP-L-galactose and GDP-D-glucose as substrates. Lower activity with GDP-L-fucose, very low activity with GDP-D-mannose, and no activity with UDP-D-glucose, UDP-D-galactose or ADP-D-glucose. Highly specific for inorganic phosphate as the guanylyl acceptor. In Arabidopsis thaliana (Mouse-ear cress), this protein is GDP-L-galactose phosphorylase 1 (VTC2).